The sequence spans 550 residues: Glucose-6-phosphate isomerase (550 aa).

Residue glutamate 356 is the Proton donor of the active site. Catalysis depends on residues histidine 387 and lysine 515.

This sequence belongs to the GPI family.

It is found in the cytoplasm. It catalyses the reaction alpha-D-glucose 6-phosphate = beta-D-fructose 6-phosphate. The protein operates within carbohydrate biosynthesis; gluconeogenesis. It functions in the pathway carbohydrate degradation; glycolysis; D-glyceraldehyde 3-phosphate and glycerone phosphate from D-glucose: step 2/4. Its function is as follows. Catalyzes the reversible isomerization of glucose-6-phosphate to fructose-6-phosphate. The sequence is that of Glucose-6-phosphate isomerase from Syntrophobacter fumaroxidans (strain DSM 10017 / MPOB).